We begin with the raw amino-acid sequence, 381 residues long: Probable serine/threonine-protein kinase PBL25 (381 aa).

The S-palmitoyl cysteine moiety is linked to residue Cys-3. The tract at residues 16–41 (GSSMPAPYKQPNSPKRTTGEVVAKNA) is disordered. The residue at position 54 (Thr-54) is a Phosphothreonine. Residues 65–342 (FRQECLIGEG…SDVITALSFL (278 aa)) form the Protein kinase domain. ATP contacts are provided by residues 71-79 (IGEGGFGRV) and Lys-94. Residue Tyr-139 is modified to Phosphotyrosine. The active-site Proton acceptor is Asp-192. Ser-196 and Ser-226 each carry phosphoserine. Thr-232 carries the post-translational modification Phosphothreonine. A Phosphotyrosine modification is found at Tyr-240. The interval 347-381 (NSSNTGSNHLQQNRSNKYQDAVQWDSSPRYANSQM) is disordered. Positions 355 to 381 (HLQQNRSNKYQDAVQWDSSPRYANSQM) are enriched in polar residues.

It belongs to the protein kinase superfamily. Ser/Thr protein kinase family.

It localises to the cell membrane. The catalysed reaction is L-seryl-[protein] + ATP = O-phospho-L-seryl-[protein] + ADP + H(+). It carries out the reaction L-threonyl-[protein] + ATP = O-phospho-L-threonyl-[protein] + ADP + H(+). Its function is as follows. May be involved in plant defense signaling. The polypeptide is Probable serine/threonine-protein kinase PBL25 (Arabidopsis thaliana (Mouse-ear cress)).